The chain runs to 1000 residues: Chromosome transmission fidelity protein 18 homolog (1000 aa).

3 disordered regions span residues 53–89 (SAGD…RDAS), 130–159 (AGNS…DSKF), and 272–301 (EFGE…SHSL). Polar residues predominate over residues 60 to 70 (SNANSKPTGDS). The span at 272 to 295 (EFGENDSEILENDDNAGEEDDEDE) shows a compositional bias: acidic residues. 396–403 (GPPGLGKT) provides a ligand contact to ATP. Polar residues predominate over residues 888-898 (ARNAGRDNTTA). The segment at 888–916 (ARNAGRDNTTAAAAVKTADPKGAKSAAKP) is disordered.

The protein belongs to the activator 1 small subunits family. CTF18 subfamily. As to quaternary structure, component of the CTF18-RFC complex, which consists of ctf18, ctf8, dcc1, rfc2, rfc3, rfc4 and rfc5. The CTF18-RFC complex associates with pcna.

It is found in the nucleus. In terms of biological role, chromosome cohesion factor involved in sister chromatid cohesion and fidelity of chromosome transmission. Component of one of the cell nuclear antigen loader complexes, CTF18-replication factor C (CTF18-RFC), which consists of ctf18, ctf8, dcc1, rfc2, rfc3, rfc4 and rfc5. The CTF18-RFC complex binds to single-stranded and primed DNAs and has weak ATPase activity that is stimulated by the presence of primed DNA, replication protein A (RPA) and by proliferating cell nuclear antigen (pcna). The CTF18-RFC complex catalyzes the ATP-dependent loading of pcna onto primed and gapped DNA. This chain is Chromosome transmission fidelity protein 18 homolog (chtf18), found in Xenopus laevis (African clawed frog).